Consider the following 321-residue polypeptide: 2,3,4,5-tetrahydropyridine-2,6-dicarboxylate N-succinyltransferase (321 aa).

D166 and E183 together coordinate Mg(2+). The Acyl-anhydride intermediate role is filled by E199. Residues R201, G216, S219, A242, E257–A258, G265, K281, and R294–S297 contribute to the succinyl-CoA site.

It belongs to the type 2 tetrahydrodipicolinate N-succinyltransferase family. Homotrimer.

It is found in the cytoplasm. It carries out the reaction (S)-2,3,4,5-tetrahydrodipicolinate + succinyl-CoA + H2O = (S)-2-succinylamino-6-oxoheptanedioate + CoA. It functions in the pathway amino-acid biosynthesis; L-lysine biosynthesis via DAP pathway; LL-2,6-diaminopimelate from (S)-tetrahydrodipicolinate (succinylase route): step 1/3. Its function is as follows. Catalyzes the conversion of the cyclic tetrahydrodipicolinate (THDP) into the acyclic N-succinyl-L-2-amino-6-oxopimelate using succinyl-CoA. The sequence is that of 2,3,4,5-tetrahydropyridine-2,6-dicarboxylate N-succinyltransferase from Rothia mucilaginosa (strain DY-18) (Stomatococcus mucilaginosus).